A 432-amino-acid polypeptide reads, in one-letter code: Glutamyl-tRNA reductase (432 aa).

Residues 49 to 52 (TCNR), serine 109, 114 to 116 (EGQ), and glutamine 120 contribute to the substrate site. Residue cysteine 50 is the Nucleophile of the active site. NADP(+) is bound at residue 198 to 203 (GAGRMS).

This sequence belongs to the glutamyl-tRNA reductase family. Homodimer.

It carries out the reaction (S)-4-amino-5-oxopentanoate + tRNA(Glu) + NADP(+) = L-glutamyl-tRNA(Glu) + NADPH + H(+). The protein operates within porphyrin-containing compound metabolism; protoporphyrin-IX biosynthesis; 5-aminolevulinate from L-glutamyl-tRNA(Glu): step 1/2. Its pathway is porphyrin-containing compound metabolism; chlorophyll biosynthesis. Functionally, catalyzes the NADPH-dependent reduction of glutamyl-tRNA(Glu) to glutamate 1-semialdehyde (GSA). This Synechococcus sp. (strain CC9605) protein is Glutamyl-tRNA reductase.